Consider the following 387-residue polypeptide: Sorting nexin-7 (387 aa).

Residues 30-151 (KDLFITVDEP…IFLTAQAWEL (122 aa)) enclose the PX domain. Arg73, Gln75, Lys103, and Arg117 together coordinate a 1,2-diacyl-sn-glycero-3-phospho-(1D-myo-inositol-3-phosphate). The BAR domain occupies 178 to 387 (GVKNRPEEFM…HLEETSEDKP (210 aa)).

Belongs to the sorting nexin family. In terms of assembly, heterodimer; heterodimerizes with SNX4.

It is found in the early endosome membrane. Functionally, involved in the regulation of endocytosis and in several stages of intracellular trafficking. Together with SNX4, involved in autophagosome assembly by regulating trafficking and recycling of phospholipid scramblase ATG9A. The protein is Sorting nexin-7 (SNX7) of Macaca fascicularis (Crab-eating macaque).